A 578-amino-acid polypeptide reads, in one-letter code: Arginine--tRNA ligase (578 aa).

The 'HIGH' region motif lies at 127-137 (PNLAKEMHVGH).

This sequence belongs to the class-I aminoacyl-tRNA synthetase family. In terms of assembly, monomer.

It is found in the cytoplasm. It carries out the reaction tRNA(Arg) + L-arginine + ATP = L-arginyl-tRNA(Arg) + AMP + diphosphate. The polypeptide is Arginine--tRNA ligase (Pseudomonas fluorescens (strain Pf0-1)).